Reading from the N-terminus, the 286-residue chain is NADPH-dependent 7-cyano-7-deazaguanine reductase (286 aa).

92 to 94 (IES) is a binding site for substrate. 94–95 (SK) is a binding site for NADPH. Residue Cys194 is the Thioimide intermediate of the active site. Asp201 serves as the catalytic Proton donor. 233 to 234 (HE) contributes to the substrate binding site. 262–263 (RG) contributes to the NADPH binding site.

Belongs to the GTP cyclohydrolase I family. QueF type 2 subfamily. In terms of assembly, homodimer.

The protein resides in the cytoplasm. It carries out the reaction 7-aminomethyl-7-carbaguanine + 2 NADP(+) = 7-cyano-7-deazaguanine + 2 NADPH + 3 H(+). Its pathway is tRNA modification; tRNA-queuosine biosynthesis. Its function is as follows. Catalyzes the NADPH-dependent reduction of 7-cyano-7-deazaguanine (preQ0) to 7-aminomethyl-7-deazaguanine (preQ1). This Shewanella oneidensis (strain ATCC 700550 / JCM 31522 / CIP 106686 / LMG 19005 / NCIMB 14063 / MR-1) protein is NADPH-dependent 7-cyano-7-deazaguanine reductase.